Reading from the N-terminus, the 212-residue chain is Large ribosomal subunit protein uL3 (212 aa).

Over residues 136–155 (THGNSLSHRSNGSIGQNQTP) the composition is skewed to polar residues. The interval 136–157 (THGNSLSHRSNGSIGQNQTPGR) is disordered. Q153 carries the N5-methylglutamine modification.

It belongs to the universal ribosomal protein uL3 family. Part of the 50S ribosomal subunit. Forms a cluster with proteins L14 and L19. Methylated by PrmB.

Its function is as follows. One of the primary rRNA binding proteins, it binds directly near the 3'-end of the 23S rRNA, where it nucleates assembly of the 50S subunit. This is Large ribosomal subunit protein uL3 from Shewanella putrefaciens (strain CN-32 / ATCC BAA-453).